The primary structure comprises 298 residues: Mitochondrial intermembrane space import and assembly protein 40 (298 aa).

A mitochondrion-targeting transit peptide spans 1–33; the sequence is MYRTALRPSQSALRAIRSTTSPSALVSSGARRF. Topologically, residues 34-52 are mitochondrial matrix; sequence ASTTSAPKKKSTWKGAAVR. A helical; Signal-anchor for type II membrane protein transmembrane segment spans residues 53-69; the sequence is WGLAVAAVYYYNTSPIF. The Mitochondrial intermembrane portion of the chain corresponds to 70–298; that stretch reads SDELPETAGT…TAANNNKKQQ (229 aa). The disordered stretch occupies residues 101–159; the sequence is RQAAEHAAARKAAQAAAKAAATPATPSESVEEQITKAEAEAEAVPEGDSKPRSESTEGV. Residues 110 to 121 are compositionally biased toward low complexity; it reads RKAAQAAAKAAA. Cystine bridges form between C191–C193, C202–C235, and C212–C225. In terms of domain architecture, CHCH spans 199–243; the sequence is HGPCGEEFKAAFSCFVYSTEEPKGMDCIEKFSHMQDCFRKYPEVY. Short sequence motifs (cx9C motif) lie at residues 202–212 and 225–235; these read CGEEFKAAFSC and CIEKFSHMQDC. The interval 248–298 is disordered; it reads ADDEEAERASAAAPAAEGTPAKEEPVENKKEEALEPATHDATAANNNKKQQ. Residues 256–266 show a composition bias toward low complexity; sequence ASAAAPAAEGT. Over residues 267-280 the composition is skewed to basic and acidic residues; the sequence is PAKEEPVENKKEEA.

Monomer. The cofactor is Cu(2+). Requires Zn(2+) as cofactor.

It localises to the mitochondrion inner membrane. In terms of biological role, required for the import and folding of small cysteine-containing proteins (small Tim) in the mitochondrial intermembrane space (IMS). Forms a redox cycle with ERV1 that involves a disulfide relay system. Precursor proteins to be imported into the IMS are translocated in their reduced form into the mitochondria. The oxidized form of MIA40 forms a transient intermolecular disulfide bridge with the reduced precursor protein, resulting in oxidation of the precursor protein that now contains an intramolecular disulfide bond and is able to undergo folding in the IMS. The sequence is that of Mitochondrial intermembrane space import and assembly protein 40 (mia-40) from Neurospora crassa (strain ATCC 24698 / 74-OR23-1A / CBS 708.71 / DSM 1257 / FGSC 987).